The chain runs to 144 residues: Large ribosomal subunit protein uL13 (144 aa).

Belongs to the universal ribosomal protein uL13 family. In terms of assembly, part of the 50S ribosomal subunit.

Its function is as follows. This protein is one of the early assembly proteins of the 50S ribosomal subunit, although it is not seen to bind rRNA by itself. It is important during the early stages of 50S assembly. The protein is Large ribosomal subunit protein uL13 of Legionella pneumophila (strain Paris).